Reading from the N-terminus, the 853-residue chain is Cytochrome P450 monooxygenase mpaDE (853 aa).

Over 1–6 (MKSLSL) the chain is Lumenal. Residues 7–29 (TWITAVAVVLYLVQRYVRSYWRL) form a helical membrane-spanning segment. The Cytoplasmic segment spans residues 30–853 (KDIPGPVLAK…DIENSIEGQK (824 aa)). Residue Cys-449 coordinates heme.

This sequence belongs to the cytochrome P450 family. Requires heme as cofactor.

The protein resides in the endoplasmic reticulum membrane. It carries out the reaction 5-methylorsellinate + reduced [NADPH--hemoprotein reductase] + O2 = 4,6-dihydroxy-2-(hydroxymethyl)-3-methylbenzoate + oxidized [NADPH--hemoprotein reductase] + H2O + H(+). The catalysed reaction is 4,6-dihydroxy-2-(hydroxymethyl)-3-methylbenzoate + H(+) = 5,7-dihydroxy-4-methylphthalide + H2O. The protein operates within secondary metabolite biosynthesis; terpenoid biosynthesis. In terms of biological role, cytochrome P450 monooxygenase; part of the gene cluster that mediates the biosynthesis of mycophenolic acid (MPA), the first isolated antibiotic natural product in the world obtained from a culture of Penicillium brevicompactum in 1893. MpaDE is an endoplasmic reticulum-bound enzyme that catalyzes the conversion of 5-methylorsellinic acid (5MOA) into the phthalide compound 5,7-dihydroxy-4,6-dimethylphthalide (DHMP). MpaDE first catalyzes hydroxylation of 5-MOA to 4,6-dihydroxy-2-(hydroxymethyl)-3-methylbenzoic acid (DHMB), and then acts as a lactone synthase that catalyzes the ring closure to convert DHMB into DHMP. The first step of the pathway is the synthesis of 5-methylorsellinic acid (5MOA) by the cytosolic polyketide synthase mpaC. 5MOA is then converted to the phthalide compound 5,7-dihydroxy-4,6-dimethylphthalide (DHMP) by the endoplasmic reticulum-bound cytochrome P450 monooxygenase mpaDE. MpaDE first catalyzes hydroxylation of 5-MOA to 4,6-dihydroxy-2-(hydroxymethyl)-3-methylbenzoic acid (DHMB). MpaDE then acts as a lactone synthase that catalyzes the ring closure to convert DHMB into DHMP. The next step is the prenylation of DHMP by the Golgi apparatus-associated prenyltransferase mpaA to yield farnesyl-DHMP (FDHMP). The ER-bound oxygenase mpaB then mediates the oxidative cleavage the C19-C20 double bond in FDHMP to yield FDHMP-3C via a mycophenolic aldehyde intermediate. The O-methyltransferase mpaG catalyzes the methylation of FDHMP-3C to yield MFDHMP-3C. After the cytosolic methylation of FDHMP-3C, MFDHMP-3C enters into peroxisomes probably via free diffusion due to its low molecular weight. Upon a peroxisomal CoA ligation reaction, catalyzed by a beta-oxidation component enzyme acyl-CoA ligase ACL891, MFDHMP-3C-CoA would then be restricted to peroxisomes for the following beta-oxidation pathway steps. The peroxisomal beta-oxidation machinery than converts MFDHMP-3C-CoA into MPA_CoA, via a beta-oxidation chain-shortening process. Finally mpaH acts as a peroxisomal acyl-CoA hydrolase with high substrate specificity toward MPA-CoA to release the final product MPA. This chain is Cytochrome P450 monooxygenase mpaDE, found in Penicillium brevicompactum.